Consider the following 66-residue polypeptide: MIALAYLATVAIAAMVLAVALRRRPTPTNPPAPAPAPALAAVDGGAEIRVILAATHQLAARLSTAA.

Residues 1–20 form a hydrophobic region; it reads MIALAYLATVAIAAMVLAVA.

This is an uncharacterized protein from Streptomyces lividans.